Consider the following 211-residue polypeptide: Regulator of G-protein signaling 2 (211 aa).

Residues Lys-32–Gln-66 are necessary for membrane association. The necessary to inhibit protein synthesis stretch occupies residues Leu-79–Cys-116. The region spanning Ala-83 to Cys-199 is the RGS domain.

Interacts with GNAQ. Does not interact with GNAI1 and GNAI3. Interacts with EIF2B5. Interacts with PRKG1 (isoform alpha). Post-translationally, phosphorylated by protein kinase C. Phosphorylation by PRKG1 leads to activation of RGS2 activity.

Its subcellular location is the cell membrane. The protein resides in the cytoplasm. It localises to the nucleus. It is found in the nucleolus. Regulates G protein-coupled receptor signaling cascades. Inhibits signal transduction by increasing the GTPase activity of G protein alpha subunits, thereby driving them into their inactive GDP-bound form. It is involved in the negative regulation of the angiotensin-activated signaling pathway. Plays a role in the regulation of blood pressure in response to signaling via G protein-coupled receptors and GNAQ. Plays a role in regulating the constriction and relaxation of vascular smooth muscle. Binds EIF2B5 and blocks its activity, thereby inhibiting the translation of mRNA into protein. This chain is Regulator of G-protein signaling 2 (Rgs2), found in Rattus norvegicus (Rat).